The primary structure comprises 365 residues: 2-aminoethylphosphonate--pyruvate transaminase (365 aa).

An N6-(pyridoxal phosphate)lysine modification is found at Lys194.

The protein belongs to the class-V pyridoxal-phosphate-dependent aminotransferase family. PhnW subfamily. Homodimer. It depends on pyridoxal 5'-phosphate as a cofactor.

The catalysed reaction is (2-aminoethyl)phosphonate + pyruvate = phosphonoacetaldehyde + L-alanine. In terms of biological role, involved in phosphonate degradation. This Bacillus cereus (strain ATCC 10987 / NRS 248) protein is 2-aminoethylphosphonate--pyruvate transaminase.